The chain runs to 114 residues: Cytochrome c2 (114 aa).

The residue at position 1 (Q1) is a Pyrrolidone carboxylic acid. Heme c is bound by residues C13, C16, H17, and M93.

It belongs to the cytochrome c family. Post-translationally, binds 1 heme c group covalently per subunit.

It is found in the periplasm. Functionally, cytochrome c2 is found mainly in purple, non-sulfur, photosynthetic bacteria where it functions as the electron donor to the oxidized bacteriochlorophyll in the photophosphorylation pathway. However, it may also have a role in the respiratory chain and is found in some non-photosynthetic bacteria. This chain is Cytochrome c2, found in Rhodopseudomonas palustris.